A 196-amino-acid chain; its full sequence is Guanylate kinase (196 aa).

The 182-residue stretch at Gly-8 to Tyr-189 folds into the Guanylate kinase-like domain. Gly-15–Lys-22 contacts ATP.

The protein belongs to the guanylate kinase family.

It is found in the cytoplasm. The catalysed reaction is GMP + ATP = GDP + ADP. In terms of biological role, essential for recycling GMP and indirectly, cGMP. The protein is Guanylate kinase of Malacoplasma penetrans (strain HF-2) (Mycoplasma penetrans).